Consider the following 522-residue polypeptide: Zinc finger protein 329 (522 aa).

Ser-30 is modified (phosphoserine). C2H2-type zinc fingers lie at residues 184 to 206 (YKCA…HRTH), 212 to 234 (YTCN…RRIH), 240 to 262 (YKCS…QRIH), 268 to 290 (YACL…QRTH), 296 to 318 (YRCN…LRIH), 324 to 346 (YECS…ERTH), 352 to 374 (FECV…QKIH), 380 to 402 (YECK…QRVH), 408 to 430 (YGCN…QRIH), 436 to 458 (YECN…QRIH), 464 to 486 (YQCL…QRLH), and 492 to 514 (SQCP…QRTH).

It belongs to the krueppel C2H2-type zinc-finger protein family.

The protein localises to the nucleus. Functionally, may be involved in transcriptional regulation. In Mus musculus (Mouse), this protein is Zinc finger protein 329 (Znf329).